Reading from the N-terminus, the 300-residue chain is Cation-efflux pump FieF (300 aa).

Helical transmembrane passes span 12-32 (AALAATALASILLLIKIVAWY), 40-60 (LAALVDSLVDIAASLTNLLVV), 82-102 (AALAQSMFISGSALFLFLTGF), and 114-134 (PGVGIAVTVVALFSTLLLVTY). Zn(2+) is bound by residues aspartate 45 and aspartate 49. Residues histidine 153 and aspartate 157 each contribute to the Zn(2+) site. The next 2 helical transmembrane spans lie at 155 to 175 (QSDVMMNGAILIALALSWYGF) and 178 to 198 (ADALFALAIGVYILYSALRMG).

This sequence belongs to the cation diffusion facilitator (CDF) transporter (TC 2.A.4) family. FieF subfamily. In terms of assembly, homodimer.

The protein resides in the cell inner membrane. It carries out the reaction Zn(2+)(in) + H(+)(out) = Zn(2+)(out) + H(+)(in). The catalysed reaction is Cd(2+)(in) + H(+)(out) = Cd(2+)(out) + H(+)(in). The enzyme catalyses Fe(2+)(in) + H(+)(out) = Fe(2+)(out) + H(+)(in). Its function is as follows. Divalent metal cation transporter which exports Zn(2+), Cd(2+) and possibly Fe(2+). May be involved in zinc and iron detoxification by efflux. In Serratia proteamaculans (strain 568), this protein is Cation-efflux pump FieF.